The chain runs to 425 residues: MDHRSKELFERAQQLIPGGVNSPVRACLGVDSDPLFVAHAKGSHLTTVDGTSFVDYVQSWGPMLLGHAHPVVASAIHAAVDRGTSYGAPCEDEVVLAEAVIDALPGVEMVRMVNSGTEATMSALRLARGVTGRNKVVKFVGCYHGHADAFLASAGSGVATLSIPGTPGVPEATVRDTLLAPYNDLTAVAELFTLHGKDIAAIIVEPVAGNMGLVLPMNGFLQGLRDLCTEHGALLIFDEVITGFRVNYGGAQKRFDITPDLTTLGKIIGGGLPVGAYGGRADLMRRIAPCGEVYQAGTLSGNPLAMAAGIATLAELKKSDYDALEARVAALATELQAILAAKGVPVRVNTIASMFTVFFTDQPVTDFASAKTANAALYTSYYKQMRDKGIYLAPSPFEAAMVSFAHTDADLAALLDAARAITLSA.

K266 is modified (N6-(pyridoxal phosphate)lysine).

This sequence belongs to the class-III pyridoxal-phosphate-dependent aminotransferase family. HemL subfamily. As to quaternary structure, homodimer. Pyridoxal 5'-phosphate is required as a cofactor.

It is found in the cytoplasm. It catalyses the reaction (S)-4-amino-5-oxopentanoate = 5-aminolevulinate. It participates in porphyrin-containing compound metabolism; protoporphyrin-IX biosynthesis; 5-aminolevulinate from L-glutamyl-tRNA(Glu): step 2/2. The chain is Glutamate-1-semialdehyde 2,1-aminomutase from Nitratidesulfovibrio vulgaris (strain DSM 19637 / Miyazaki F) (Desulfovibrio vulgaris).